Here is a 228-residue protein sequence, read N- to C-terminus: RNA chaperone ProQ (228 aa).

The tract at residues 107 to 178 (KARVQAQRAE…REEKHTPVSD (72 aa)) is disordered. Composition is skewed to basic and acidic residues over residues 117-136 (QQAKKREAAAAAGEKEDAPR) and 146-175 (RRKEGAERKPRADKPTTKAPRAPREEKHTP).

It belongs to the ProQ family.

The protein localises to the cytoplasm. Its function is as follows. RNA chaperone with significant RNA binding, RNA strand exchange and RNA duplexing activities. May regulate ProP activity through an RNA-based, post-transcriptional mechanism. The polypeptide is RNA chaperone ProQ (Salmonella agona (strain SL483)).